We begin with the raw amino-acid sequence, 201 residues long: Small ribosomal subunit protein uS4 (201 aa).

Positions 20 to 46 (SGTGKELSRRPYAPGQHGQDRRGSLSE) are disordered. In terms of domain architecture, S4 RNA-binding spans 93–156 (RRLDNVVYRL…KDLQIVKEAL (64 aa)).

This sequence belongs to the universal ribosomal protein uS4 family. As to quaternary structure, part of the 30S ribosomal subunit. Contacts protein S5. The interaction surface between S4 and S5 is involved in control of translational fidelity.

Its function is as follows. One of the primary rRNA binding proteins, it binds directly to 16S rRNA where it nucleates assembly of the body of the 30S subunit. Functionally, with S5 and S12 plays an important role in translational accuracy. This chain is Small ribosomal subunit protein uS4, found in Ligilactobacillus salivarius (strain UCC118) (Lactobacillus salivarius).